The sequence spans 92 residues: Small ribosomal subunit protein uS17 (92 aa).

It belongs to the universal ribosomal protein uS17 family. Part of the 30S ribosomal subunit.

Its function is as follows. One of the primary rRNA binding proteins, it binds specifically to the 5'-end of 16S ribosomal RNA. The chain is Small ribosomal subunit protein uS17 from Cupriavidus necator (strain ATCC 17699 / DSM 428 / KCTC 22496 / NCIMB 10442 / H16 / Stanier 337) (Ralstonia eutropha).